A 436-amino-acid polypeptide reads, in one-letter code: MGQVLPLVTRQGDRIAIVSGLRTPFARQATAFHGIPAVDLGKMVVGELLARSEIPAEVIEQLVFGQVVQMPEAPNIAREIVLGTGMNVHTDAYSVSRACATSFQAVANVAESLMAGTIRAGIAGGADSSSVLPIGVSKKLARVLVDVNKARTMSQRLKLFSRLRLRDLMPVPPAVAEYSTGLRMGDTAEQMAKTYGITREQQDALAHRSHQRAAQAWSDGKLKEEVMTAFIPPYKQPLVEDNNIRGNSSLADYAKLRPAFDRKHGTVTAANSTPLTDGAAAVILMTESRAKELGLVPLGYLRSYAFTAIDVWQDMLLGPAWSTPLALERAGLTMSDLTLIDMHEAFAAQTLANIQLLGSERFAREVLGRAHATGEVDDSKFNVLGGSIAYGHPFAATGARMITQTLHELRRRGGGFGLVTACAAGGLGAAMVLEAE.

Cys99 functions as the Acyl-thioester intermediate in the catalytic mechanism. Catalysis depends on proton acceptor residues His392 and Cys422.

Belongs to the thiolase-like superfamily. Thiolase family. In terms of assembly, heterotetramer of two alpha chains (FadJ) and two beta chains (FadI).

The protein localises to the cytoplasm. It catalyses the reaction an acyl-CoA + acetyl-CoA = a 3-oxoacyl-CoA + CoA. The protein operates within lipid metabolism; fatty acid beta-oxidation. Catalyzes the final step of fatty acid oxidation in which acetyl-CoA is released and the CoA ester of a fatty acid two carbons shorter is formed. The chain is 3-ketoacyl-CoA thiolase from Escherichia coli O8 (strain IAI1).